Consider the following 598-residue polypeptide: Tail knob protein gp9 (598 aa).

Belongs to the picovirinae distal tube protein family. Homohexamer; forms a hexameric tube structure with six flexible hydrophobic loops.

It localises to the virion. Distal (knob) tail protein that plugs the end of the tube before DNA ejection and forms a channel perforating the host membrane during ejection. In Bacillus subtilis (Bacteriophage B103), this protein is Tail knob protein gp9 (9).